We begin with the raw amino-acid sequence, 134 residues long: Profilin-3 (134 aa).

Cys13 and Cys118 are joined by a disulfide. An Involved in PIP2 interaction motif is present at residues 84–100; that stretch reads AVIRGKKGSGGITIKKT. A Phosphothreonine modification is found at Thr114.

Belongs to the profilin family. In terms of assembly, occurs in many kinds of cells as a complex with monomeric actin in a 1:1 ratio. Phosphorylated by MAP kinases.

The protein resides in the cytoplasm. It is found in the cytoskeleton. In terms of biological role, binds to actin and affects the structure of the cytoskeleton. At high concentrations, profilin prevents the polymerization of actin, whereas it enhances it at low concentrations. This Olea europaea (Common olive) protein is Profilin-3.